The following is a 1249-amino-acid chain: Calmodulin-regulated spectrin-associated protein 3 (1249 aa).

Disordered regions lie at residues 183-205, 328-385, 430-457, 473-609, 632-696, 714-1029, and 1061-1111; these read KTEQ…APAQ, PDGH…SMSH, VSSD…GDLP, LLPD…RLEE, LGKS…HEGL, QRDM…SALA, and NNLG…TGPR. Position 184 is a phosphothreonine (Thr184). Residues 189–205 are compositionally biased toward low complexity; sequence AQRASPAAPADGAAPAQ. Residue Ser193 is modified to Phosphoserine. Residues 203-312 enclose the Calponin-homology (CH) domain; it reads PAQPSIRYRK…LVVMLAELFM (110 aa). 7 positions are modified to phosphoserine: Ser334, Ser341, Ser347, Ser351, Ser368, Ser373, and Ser382. Residues 341-352 show a composition bias toward low complexity; the sequence is SPPQNNSGSSSP. Residues 364-383 show a composition bias toward polar residues; sequence GGPQSPLRGSTGSLKSSPSM. Pro residues predominate over residues 437–454; the sequence is PPRPAPARTPTQPPPEPG. Ser547, Ser554, and Ser560 each carry phosphoserine. The span at 568 to 579 shows a compositional bias: basic and acidic residues; the sequence is AERKKQLVKAEA. The segment covering 594–604 has biased composition (low complexity); sequence EALSSEMSELS. Residues 594–628 are a coiled coil; that stretch reads EALSSEMSELSARLEEKRRAIEAQKRRIEAIFAKH. Positions 647-657 are enriched in acidic residues; the sequence is GEAEAEAEEAD. Ser685 is subject to Phosphoserine. Residues 696–729 are a coiled coil; the sequence is LGEYNRAVSKLSAALSSLQRDMQRLTDQQQRLLA. Residues 731–741 show a composition bias toward pro residues; it reads PEAPGSAPPPA. Residues 754-779 show a composition bias toward low complexity; that stretch reads AASPSPARRVPATRRSPGPGPSQSPR. The residue at position 769 (Ser769) is a Phosphoserine. Thr799 carries the phosphothreonine modification. Ser814 is subject to Phosphoserine. Over residues 814–825 the composition is skewed to polar residues; that stretch reads SPSQVPVQTRSS. Residues 889-940 show a composition bias toward basic and acidic residues; the sequence is YKDEDKPEDEMAQKRASLLERQQRRAEEARRRKQWQEVEKEQRREEAARLAQ. Residues 896–935 are a coiled coil; that stretch reads EDEMAQKRASLLERQQRRAEEARRRKQWQEVEKEQRREEA. The span at 950 to 964 shows a compositional bias: low complexity; it reads VSAVPMATPAPAARA. Residues 970–998 are compositionally biased toward basic and acidic residues; it reads VGPRKGDFTRQEYERRAQLKLMDDLDKVL. Ser1074 is subject to Phosphoserine. Residues 1109–1243 form the CKK domain; sequence GPRLYKEPSA…QGKKPTTPKK (135 aa).

It belongs to the CAMSAP1 family. As to quaternary structure, interacts with PLEKHA7. Interacts with CAMSAP2. Interacts with KATNA1 and KATNB1; leading to regulate the length of CAMSAP3-decorated microtubule stretches. Interacts with AKAP9; regulating Golgi assembly in epithelial cells. Interacts with MACF1. Interacts with AKNA.

It is found in the cytoplasm. The protein localises to the cytoskeleton. It localises to the cell junction. The protein resides in the adherens junction. Its subcellular location is the cilium axoneme. It is found in the cilium basal body. Key microtubule-organizing protein that specifically binds the minus-end of non-centrosomal microtubules and regulates their dynamics and organization. Specifically recognizes growing microtubule minus-ends and autonomously decorates and stabilizes microtubule lattice formed by microtubule minus-end polymerization. Acts on free microtubule minus-ends that are not capped by microtubule-nucleating proteins or other factors and protects microtubule minus-ends from depolymerization. In addition, it also reduces the velocity of microtubule polymerization. Required for the biogenesis and the maintenance of zonula adherens by anchoring the minus-end of microtubules to zonula adherens and by recruiting the kinesin KIFC3 to those junctional sites. Required for orienting the apical-to-basal polarity of microtubules in epithelial cells: acts by tethering non-centrosomal microtubules to the apical cortex, leading to their longitudinal orientation. Plays a key role in early embryos, which lack centrosomes: accumulates at the microtubule bridges that connect pairs of cells and enables the formation of a non-centrosomal microtubule-organizing center that directs intracellular transport in the early embryo. Couples non-centrosomal microtubules with actin: interaction with MACF1 at the minus ends of non-centrosomal microtubules, tethers the microtubules to actin filaments, regulating focal adhesion size and cell migration. Plays a key role in the generation of non-centrosomal microtubules by accumulating in the pericentrosomal region and cooperating with KATNA1 to release non-centrosomal microtubules from the centrosome. Through the microtubule cytoskeleton, also regulates the organization of cellular organelles including the Golgi and the early endosomes. Through interaction with AKAP9, involved in translocation of Golgi vesicles in epithelial cells, where microtubules are mainly non-centrosomal. Plays an important role in motile cilia function by facilitatating proper orientation of basal bodies and formation of central microtubule pairs in motile cilia. This is Calmodulin-regulated spectrin-associated protein 3 from Homo sapiens (Human).